The sequence spans 728 residues: Phomopsene synthase (728 aa).

A terpene cyclase region spans residues Met1 to Asp327. Residues Asp94 and Asp98 each contribute to the Mg(2+) site. Substrate-binding positions include Asp94, Asp98, Arg181 to Asp184, Asn226, Ser230 to Glu234, and Arg319 to Tyr320. A DDXXD 1 motif is present at residues Asp94–Asp98. The NSE/DTE signature appears at Asn226 to Glu234. The prenyltransferase stretch occupies residues Glu328 to Val728. The segment covering Glu352–Asp363 has biased composition (basic and acidic residues). The disordered stretch occupies residues Glu352–Lys379. Repeat copies occupy residues Gly381–Asn386, Gly387–Asn392, and Gly393–Asn398. The 3 X 6 AA approximate tandem repeats stretch occupies residues Gly381 to Asn398. 3 residues coordinate isopentenyl diphosphate: Lys447, Arg450, and His479. Mg(2+) is bound by residues Asp486 and Asp490. The short motif at Asp486–Asp490 is the DDXXD 2 element. Residue Arg495 participates in dimethylallyl diphosphate binding. Arg496 is an isopentenyl diphosphate binding site. Dimethylallyl diphosphate contacts are provided by Lys574, Thr575, Gln610, Asn617, Lys627, and Lys637.

It in the N-terminal section; belongs to the terpene synthase family. The protein in the C-terminal section; belongs to the FPP/GGPP synthase family. Hexamer. Mg(2+) is required as a cofactor.

It catalyses the reaction isopentenyl diphosphate + (2E,6E)-farnesyl diphosphate = (2E,6E,10E)-geranylgeranyl diphosphate + diphosphate. The protein operates within secondary metabolite biosynthesis; terpenoid biosynthesis. In terms of biological role, bifunctional terpene synthase; part of the gene cluster that mediates the biosynthesis of the diterpene methyl phomopsenonate. At first, the universal precursor of diterpene, geranylgeranyl diphosphate (GGPP) is provided and is cyclized by the unusual bifunctional terpene synthase PaPS to give phomopsene. The C-terminal prenyltransferase domain of PaPS catalyzes formation of GGPP, whereas the N-terminal terpene cyclase domain catalyzes the cyclization of GGPP to phomopsene. Since the oxidation of a methylgroup to a carboxyl group is frequently catalyzed by a cytochrome P450 monooxygenase, the C-16 methyl group would be oxidized by the cluster-specific cytochrome P450 monooxygenase ORF3. Subsequently, oxidation of the allylic position and methylation of the carboxyl group may give methyl phomopsenonate. Although further study is necessary to identify genes such as a monooxygenase and a methyltransferase, the predicted functions of genes on the cluster are correlated with the structure of methyl phomopsenonate. The protein is Phomopsene synthase of Phomopsis amygdali (Fusicoccum amygdali).